The sequence spans 225 residues: Membrane-spanning 4-domains subfamily A member 4D (225 aa).

Residues 1 to 42 (MQGLAQTTMAVVPGGAPPSENSVIKSQMWNKNKEKFLKGEPK) lie on the Cytoplasmic side of the membrane. Residues 43-63 (VLGAIQVMIAFINFSLGIIII) traverse the membrane as a helical segment. Residues 64–73 (LNRVSERFMS) lie on the Extracellular side of the membrane. Residues 74-94 (VLLLAPFWGSIMFIFSGSLSI) form a helical membrane-spanning segment. Over 95-113 (AAGVKPTKAMIISSLSVNT) the chain is Cytoplasmic. The helical transmembrane segment at 114-134 (ISSVLAVAASIIGVISVISGV) threads the bilayer. The Extracellular segment spans residues 135–148 (FRQFRSQPAIASLD). The helical transmembrane segment at 149–169 (VLMTILNMLEFCIAVSVSAFG) threads the bilayer. The Cytoplasmic segment spans residues 170–225 (CKASCCNSSEVLVVLPSNSAVTVTAPPMILQPLPPSECQGKNVPENLYRNQPGEIV).

This sequence belongs to the MS4A family. In terms of tissue distribution, expressed in thymus, spleen, peripheral lymph node, liver, kidney, heart, colon, lung, and testes.

The protein localises to the membrane. In terms of biological role, may be involved in signal transduction as a component of a multimeric receptor complex. This chain is Membrane-spanning 4-domains subfamily A member 4D (Ms4a4d), found in Mus musculus (Mouse).